The following is a 156-amino-acid chain: Small ribosomal subunit protein uS7 (156 aa).

This sequence belongs to the universal ribosomal protein uS7 family. In terms of assembly, part of the 30S ribosomal subunit. Contacts proteins S9 and S11.

In terms of biological role, one of the primary rRNA binding proteins, it binds directly to 16S rRNA where it nucleates assembly of the head domain of the 30S subunit. Is located at the subunit interface close to the decoding center, probably blocks exit of the E-site tRNA. The chain is Small ribosomal subunit protein uS7 from Mycolicibacterium gilvum (strain PYR-GCK) (Mycobacterium gilvum (strain PYR-GCK)).